The following is a 208-amino-acid chain: NAD(P)H-quinone oxidoreductase subunit I (208 aa).

2 4Fe-4S ferredoxin-type domains span residues 55 to 84 (GRIHYEFDKCIACEVCVRVCPINLPVVDWV) and 95 to 124 (RNYSIDFGVCIFCGNCVEYCPTNCLSMTEE). [4Fe-4S] cluster-binding residues include Cys64, Cys67, Cys70, Cys74, Cys104, Cys107, Cys110, and Cys114.

Belongs to the complex I 23 kDa subunit family. NDH-1 is composed of at least 11 different subunits. It depends on [4Fe-4S] cluster as a cofactor.

The protein localises to the cellular thylakoid membrane. It catalyses the reaction a plastoquinone + NADH + (n+1) H(+)(in) = a plastoquinol + NAD(+) + n H(+)(out). It carries out the reaction a plastoquinone + NADPH + (n+1) H(+)(in) = a plastoquinol + NADP(+) + n H(+)(out). Its function is as follows. NDH-1 shuttles electrons from an unknown electron donor, via FMN and iron-sulfur (Fe-S) centers, to quinones in the respiratory and/or the photosynthetic chain. The immediate electron acceptor for the enzyme in this species is believed to be plastoquinone. Couples the redox reaction to proton translocation, and thus conserves the redox energy in a proton gradient. This Prochlorococcus marinus subsp. pastoris (strain CCMP1986 / NIES-2087 / MED4) protein is NAD(P)H-quinone oxidoreductase subunit I.